Reading from the N-terminus, the 436-residue chain is Enolase 1 (436 aa).

Serine 40 serves as a coordination point for Mg(2+). Cysteine 147 and cysteine 169 are joined by a disulfide. The (2R)-2-phosphoglycerate site is built by glutamine 164 and glutamate 208. The active-site Proton donor is glutamate 208. Residues aspartate 243, glutamate 296, and aspartate 322 each contribute to the Mg(2+) site. Aspartate 322 lines the (2R)-2-phosphoglycerate pocket. Residue lysine 347 is the Proton acceptor of the active site. (2R)-2-phosphoglycerate-binding residues include arginine 376 and serine 377.

It belongs to the enolase family. As to quaternary structure, homodimer. Homotetramer. Interacts with methyltransferase METH; the interaction inhibits METH catalytic activity; 2-phosphoglycerate binding to ENO prevents the interaction with METH. Mg(2+) is required as a cofactor.

Its subcellular location is the cytoplasm. It localises to the nucleus. It carries out the reaction (2R)-2-phosphoglycerate = phosphoenolpyruvate + H2O. It participates in carbohydrate degradation; glycolysis; pyruvate from D-glyceraldehyde 3-phosphate: step 4/5. Glycolytic enzyme that catalyzes the conversion of 2-phosphoglycerate to phosphoenolpyruvate. Inhibits tRNA methyltransferase METH catalytic activity in the absence of 2-phosphoglycerate. This Entamoeba histolytica (strain ATCC 30459 / HM-1:IMSS / ABRM) protein is Enolase 1.